Reading from the N-terminus, the 370-residue chain is Protein rough sheath 2 (370 aa).

HTH myb-type domains lie at 1 to 53 and 54 to 108; these read MKER…KNYL and RPGI…EKQQ. 2 consecutive DNA-binding regions (H-T-H motif) follow at residues 27 to 53 and 81 to 104; these read WHLVSQRMNVALDRDAKSCLERWKNYL and WKKIAAEVPGRTAKRLGKWWEVFK. Residues 107-129 form a disordered region; that stretch reads QQRELRDSRRPPPEPSPDERGRY. Positions 276 to 340 form a coiled coil; the sequence is KRVEQQLEME…QVKEEKMAEQ (65 aa).

In terms of assembly, homodimer. Interacts with AS2, WRKY1, HIRA, a probable histone chaperone, and RIK, a predicted RNA binding protein. In terms of tissue distribution, expressed in lateral organ promordia.

The protein resides in the nucleus. Functionally, transcription factor required for normal cell differentiation. Interacts directly with asymmetric leaves 2 (AS2) to repress the knox homeobox genes. The chain is Protein rough sheath 2 (RS2) from Zea mays (Maize).